The following is a 289-amino-acid chain: uncharacterized protein (289 aa).

The tract at residues 25–66 (GGSGDSQSAHTPSTSIHTQNNSTPNKNTSTPPVNVSNANNLE) is disordered. Residues 33-43 (AHTPSTSIHTQ) show a composition bias toward polar residues. Over residues 44-59 (NNSTPNKNTSTPPVNV) the composition is skewed to low complexity.

This is an uncharacterized protein from Haemophilus influenzae (strain ATCC 51907 / DSM 11121 / KW20 / Rd).